A 658-amino-acid polypeptide reads, in one-letter code: Integrator complex subunit 9 (658 aa).

1D-myo-inositol hexakisphosphate contacts are provided by Lys-2 and Phe-19. Residue Lys-58 forms a Glycyl lysine isopeptide (Lys-Gly) (interchain with G-Cter in SUMO2) linkage. Residues Lys-510 and Arg-511 each coordinate 1D-myo-inositol hexakisphosphate. Residues 548–574 (DNKHLLQPPPRPAQPTSGKKRKRVSDD) are disordered. Positions 566–570 (KKRKR) match the Nuclear localization signal motif.

The protein belongs to the metallo-beta-lactamase superfamily. RNA-metabolizing metallo-beta-lactamase-like family. INTS9 subfamily. In terms of assembly, component of the Integrator complex, composed of core subunits INTS1, INTS2, INTS3, INTS4, INTS5, INTS6, INTS7, INTS8, INTS9/RC74, INTS10, INTS11/CPSF3L, INTS12, INTS13, INTS14 and INTS15. The core complex associates with protein phosphatase 2A subunits PPP2CA and PPP2R1A, to form the Integrator-PP2A (INTAC) complex. INTS9 is part of the RNA endonuclease subcomplex, composed of INTS4, INTS9, INTS11 and inositol hexakisphosphate (InsP6). Interacts with WDR73; interaction is required for the assembly of the RNA endonuclease subcomplex in the cytoplasm. Interacts with BRAT1; interaction is required for the assembly of the RNA endonuclease subcomplex. Interacts with ESRRB, ESRRB is not a core component of the Integrator complex and this association is a bridge for the interaction with the multiprotein complex Integrator; attracts the transcriptional machinery.

It localises to the nucleus. It is found in the cytoplasm. Component of the integrator complex, a multiprotein complex that terminates RNA polymerase II (Pol II) transcription in the promoter-proximal region of genes. The integrator complex provides a quality checkpoint during transcription elongation by driving premature transcription termination of transcripts that are unfavorably configured for transcriptional elongation: the complex terminates transcription by (1) catalyzing dephosphorylation of the C-terminal domain (CTD) of Pol II subunit POLR2A/RPB1 and SUPT5H/SPT5, (2) degrading the exiting nascent RNA transcript via endonuclease activity and (3) promoting the release of Pol II from bound DNA. The integrator complex is also involved in terminating the synthesis of non-coding Pol II transcripts, such as enhancer RNAs (eRNAs), small nuclear RNAs (snRNAs), telomerase RNAs and long non-coding RNAs (lncRNAs). Mediates recruitment of cytoplasmic dynein to the nuclear envelope, probably as component of the integrator complex. In Homo sapiens (Human), this protein is Integrator complex subunit 9.